Consider the following 260-residue polypeptide: Hydroxyethylthiazole kinase 1 (260 aa).

Position 39 (methionine 39) interacts with substrate. 2 residues coordinate ATP: arginine 115 and threonine 160. Substrate is bound at residue glycine 187.

This sequence belongs to the Thz kinase family. Mg(2+) serves as cofactor.

The enzyme catalyses 5-(2-hydroxyethyl)-4-methylthiazole + ATP = 4-methyl-5-(2-phosphooxyethyl)-thiazole + ADP + H(+). It participates in cofactor biosynthesis; thiamine diphosphate biosynthesis; 4-methyl-5-(2-phosphoethyl)-thiazole from 5-(2-hydroxyethyl)-4-methylthiazole: step 1/1. Functionally, catalyzes the phosphorylation of the hydroxyl group of 4-methyl-5-beta-hydroxyethylthiazole (THZ). The sequence is that of Hydroxyethylthiazole kinase 1 from Streptococcus pneumoniae (strain 70585).